Here is a 319-residue protein sequence, read N- to C-terminus: HTH-type transcriptional regulator YidZ (319 aa).

One can recognise an HTH lysR-type domain in the interval 8-65 (LDLNLLLCLQLLMQERSVTKAAKRMNVTPSAVSKSLAKLRAWFDDPLFVNSPLGLSPT). Positions 25–44 (VTKAAKRMNVTPSAVSKSLA) form a DNA-binding region, H-T-H motif.

Belongs to the LysR transcriptional regulatory family.

Its function is as follows. Involved in anaerobic NO protection. This Escherichia coli O157:H7 (strain EC4115 / EHEC) protein is HTH-type transcriptional regulator YidZ.